Consider the following 322-residue polypeptide: Acetyl-coenzyme A carboxylase carboxyl transferase subunit alpha (322 aa).

The CoA carboxyltransferase C-terminal domain maps to 39–293 (RLQKKSQALT…RRALTDTLAE (255 aa)).

Belongs to the AccA family. Acetyl-CoA carboxylase is a heterohexamer composed of biotin carboxyl carrier protein (AccB), biotin carboxylase (AccC) and two subunits each of ACCase subunit alpha (AccA) and ACCase subunit beta (AccD).

Its subcellular location is the cytoplasm. The catalysed reaction is N(6)-carboxybiotinyl-L-lysyl-[protein] + acetyl-CoA = N(6)-biotinyl-L-lysyl-[protein] + malonyl-CoA. The protein operates within lipid metabolism; malonyl-CoA biosynthesis; malonyl-CoA from acetyl-CoA: step 1/1. Functionally, component of the acetyl coenzyme A carboxylase (ACC) complex. First, biotin carboxylase catalyzes the carboxylation of biotin on its carrier protein (BCCP) and then the CO(2) group is transferred by the carboxyltransferase to acetyl-CoA to form malonyl-CoA. This Thiobacillus denitrificans (strain ATCC 25259 / T1) protein is Acetyl-coenzyme A carboxylase carboxyl transferase subunit alpha.